Reading from the N-terminus, the 344-residue chain is Outer membrane protein assembly factor BamC (344 aa).

The N-terminal stretch at 1 to 24 is a signal peptide; that stretch reads MAYSVQKSRLAKVAGVSLVLLLAA. Residue cysteine 25 is the site of N-palmitoyl cysteine attachment. Cysteine 25 is lipidated: S-diacylglycerol cysteine.

The protein belongs to the BamC family. In terms of assembly, part of the Bam complex, which is composed of the outer membrane protein BamA, and four lipoproteins BamB, BamC, BamD and BamE. Forms a subcomplex with BamD and BamE. The Bam complex has the shape of a hat, with the BamA beta-barrel crown in the outer membrane and the periplasmic brim formed by the BamA POTRA domains and the 4 lipoproteins.

The protein resides in the cell outer membrane. In terms of biological role, part of the outer membrane protein assembly complex (Bam), which is involved in assembly and insertion of beta-barrel proteins into the outer membrane. Nonessential member of the complex that stabilizes the interaction between the essential proteins BamA and BamD. Efficient substrate folding and insertion into the outer membrane requires all 5 subunits. A lateral gate may open between the first and last strands of the BamA beta-barrel that allows substrate to insert into the outer membrane; comparison of the structures of complete and nearly complete Bam complexes show there is considerable movement of all 5 proteins. In Escherichia coli (strain K12), this protein is Outer membrane protein assembly factor BamC.